A 239-amino-acid chain; its full sequence is Uridylate kinase (239 aa).

10 to 13 (KLSG) lines the ATP pocket. The tract at residues 18–23 (GEDGYG) is involved in allosteric activation by GTP. G52 is a binding site for UMP. ATP-binding residues include G53 and R57. UMP is bound by residues D72 and 133 to 140 (TGNPYFTT). ATP-binding residues include T160, Y166, and D169.

This sequence belongs to the UMP kinase family. Homohexamer.

The protein localises to the cytoplasm. It catalyses the reaction UMP + ATP = UDP + ADP. Its pathway is pyrimidine metabolism; CTP biosynthesis via de novo pathway; UDP from UMP (UMPK route): step 1/1. Its activity is regulated as follows. Allosterically activated by GTP. Inhibited by UTP. Its function is as follows. Catalyzes the reversible phosphorylation of UMP to UDP. The polypeptide is Uridylate kinase (Chlorobium chlorochromatii (strain CaD3)).